The sequence spans 367 residues: 2-aminoethylphosphonate--pyruvate transaminase (367 aa).

An N6-(pyridoxal phosphate)lysine modification is found at K194.

Belongs to the class-V pyridoxal-phosphate-dependent aminotransferase family. PhnW subfamily. In terms of assembly, homodimer. Pyridoxal 5'-phosphate is required as a cofactor.

It carries out the reaction (2-aminoethyl)phosphonate + pyruvate = phosphonoacetaldehyde + L-alanine. In terms of biological role, involved in phosphonate degradation. The polypeptide is 2-aminoethylphosphonate--pyruvate transaminase (Salmonella agona (strain SL483)).